Consider the following 629-residue polypeptide: Pescadillo homolog (629 aa).

The BRCT domain maps to 321–414; sequence RLRTLFKGLK…QLLPTNKYFI (94 aa). Disordered regions lie at residues 439–470, 488–568, and 598–629; these read KALLDPSLIETHAQSDEDSEDEAEKEEEETVD, EYKK…MVKP, and IEASEKEARKTAKREARKEAAAAAAKASKLGK. Ser-453 and Ser-457 each carry phosphoserine. 2 stretches are compositionally biased toward acidic residues: residues 454–470 and 498–523; these read DEDSEDEAEKEEEETVD and VNEDEEDPEDDDEDDDEEEAEEEELD. The span at 524–535 shows a compositional bias: basic and acidic residues; sequence EKSKRLQEEKQK. Positions 542–551 are enriched in basic residues; that stretch reads KVHKVNKRQV. Basic and acidic residues-rich tracts occupy residues 552–561 and 598–617; these read HKAEVDEHRL and IEASEKEARKTAKREARKEA. The stretch at 584 to 627 forms a coiled coil; sequence KEKEEWLLRKKRRTIEASEKEARKTAKREARKEAAAAAAKASKL. The span at 618-629 shows a compositional bias: low complexity; it reads AAAAAKASKLGK.

The protein belongs to the pescadillo family.

It localises to the nucleus. Its subcellular location is the nucleolus. The protein localises to the nucleoplasm. Required for maturation of ribosomal RNAs and formation of the large ribosomal subunit. In Drosophila erecta (Fruit fly), this protein is Pescadillo homolog.